Consider the following 257-residue polypeptide: Hydroxyacylglutathione hydrolase (257 aa).

Positions 54, 56, 58, 59, 113, 137, and 175 each coordinate Zn(2+).

This sequence belongs to the metallo-beta-lactamase superfamily. Glyoxalase II family. Monomer. It depends on Zn(2+) as a cofactor.

It catalyses the reaction an S-(2-hydroxyacyl)glutathione + H2O = a 2-hydroxy carboxylate + glutathione + H(+). The protein operates within secondary metabolite metabolism; methylglyoxal degradation; (R)-lactate from methylglyoxal: step 2/2. Its function is as follows. Thiolesterase that catalyzes the hydrolysis of S-D-lactoyl-glutathione to form glutathione and D-lactic acid. The protein is Hydroxyacylglutathione hydrolase of Gloeothece citriformis (strain PCC 7424) (Cyanothece sp. (strain PCC 7424)).